We begin with the raw amino-acid sequence, 431 residues long: Septin-11 (431 aa).

Residue A2 is modified to N-acetylalanine. S9 is modified (phosphoserine). The 267-residue stretch at 38 to 304 (QGFCFNILCV…ELYRRCKLEE (267 aa)) folds into the Septin-type G domain. The tract at residues 48-55 (GETGIGKS) is G1 motif. GTP contacts are provided by residues 48–55 (GETGIGKS), G103, 184–192 (KADTIAKNE), G238, and R253. Residues 100–103 (DTVG) are G3 motif. Residues 183–186 (AKAD) are G4 motif. Residues 320-413 (QETYEAKRNE…LLQSQAQQSG (94 aa)) adopt a coiled-coil conformation. Residues 400-431 (AAAQLLQSQAQQSGAQQTKKDKDKKNPWLCTE) form a disordered region. Low complexity predominate over residues 401-416 (AAQLLQSQAQQSGAQQ).

It belongs to the TRAFAC class TrmE-Era-EngA-EngB-Septin-like GTPase superfamily. Septin GTPase family. As to quaternary structure, septins polymerize into heterooligomeric protein complexes that form filaments, and can associate with cellular membranes, actin filaments and microtubules. Forms homooligomers. GTPase activity is required for filament formation. Interacts with SEPTIN7, SEPTIN9 and SEPTIN12. Expressed in the cerebral cortex (at protein level).

The protein localises to the cytoplasm. The protein resides in the cytoskeleton. It is found in the synapse. It localises to the cell projection. Its subcellular location is the dendritic spine. The protein localises to the axon. Filament-forming cytoskeletal GTPase. May play a role in cytokinesis (Potential). May play a role in the cytoarchitecture of neurons, including dendritic arborization and dendritic spines, and in GABAergic synaptic connectivity. This chain is Septin-11, found in Mus musculus (Mouse).